We begin with the raw amino-acid sequence, 333 residues long: Autoinducer 2 import system permease protein LsrD (333 aa).

The next 10 helical transmembrane spans lie at 7 to 27, 45 to 65, 67 to 87, 90 to 110, 118 to 138, 162 to 182, 212 to 232, 240 to 260, 261 to 281, and 288 to 308; these read YGWE…FGLS, ICIG…GIDI, FGST…AGVP, VAIP…AGLI, LVIT…LSGL, LFGL…FWLL, TLCM…ILLV, SDLG…GGAN, IYGG…VGYL, and IGTP…LVVV.

The protein belongs to the binding-protein-dependent transport system permease family. AraH/RbsC subfamily. In terms of assembly, the complex is composed of two ATP-binding proteins (LsrA), two transmembrane proteins (LsrC and LsrD) and a solute-binding protein (LsrB).

Its subcellular location is the cell inner membrane. In terms of biological role, part of the ABC transporter complex LsrABCD involved in autoinducer 2 (AI-2) import. Probably responsible for the translocation of the substrate across the membrane. This Yersinia pestis bv. Antiqua (strain Antiqua) protein is Autoinducer 2 import system permease protein LsrD (lsrD).